The primary structure comprises 79 residues: Serine rich endogenous peptide 2 (79 aa).

The first 19 residues, 1-19 (MANNLGLVILLLVIVLVSC), serve as a signal peptide directing secretion. The segment at 25–79 (CALASPQKSRPSSEWRRKLIPVRSSRSPRSPSFAPKKPPPPPPSPPLSPSSPPSN) is disordered. The SCOOP motif motif lies at 45-57 (PVRSSRSPRSPSF). Low complexity predominate over residues 45–59 (PVRSSRSPRSPSFAP). The SxS motif essential for MIK2 binding motif lies at 49–51 (SRS). Positions 60-79 (KKPPPPPPSPPLSPSSPPSN) are enriched in pro residues.

Belongs to the serine rich endogenous peptide (SCOOP) phytocytokine family. Interacts with MIK2 (via extracellular leucine-rich repeat domain); this interaction triggers the formation of complex between MIK2 and the BAK1/SERK3 and SERK4 coreceptors, and subsequent BAK1 activation by phosphorylation.

The protein localises to the cell membrane. It localises to the secreted. The protein resides in the extracellular space. Its subcellular location is the apoplast. Functionally, brassicaceae-specific phytocytokine (plant endogenous peptide released into the apoplast) perceived by MIK2 in a BAK1/SERK3 and SERK4 coreceptors-dependent manner, that modulates various physiological and antimicrobial processes including growth prevention and reactive oxygen species (ROS) response regulation. The chain is Serine rich endogenous peptide 2 from Arabidopsis thaliana (Mouse-ear cress).